A 73-amino-acid chain; its full sequence is Large ribosomal subunit protein bL31 (73 aa).

The protein belongs to the bacterial ribosomal protein bL31 family. Type A subfamily. Part of the 50S ribosomal subunit.

Binds the 23S rRNA. In Synechococcus sp. (strain JA-3-3Ab) (Cyanobacteria bacterium Yellowstone A-Prime), this protein is Large ribosomal subunit protein bL31.